Consider the following 1598-residue polypeptide: Pentafunctional AROM polypeptide (1598 aa).

Residues 1-384 (MGVPTKISIL…YEPRASTVSN (384 aa)) form a 3-dehydroquinate synthase region. NAD(+) is bound by residues 44 to 46 (DTN), 81 to 84 (ESSK), 114 to 116 (GGV), and D119. R130 contacts 7-phospho-2-dehydro-3-deoxy-D-arabino-heptonate. An NAD(+)-binding site is contributed by 139–140 (TT). D146 and K152 together coordinate 7-phospho-2-dehydro-3-deoxy-D-arabino-heptonate. K161 is a binding site for NAD(+). N162 is a 7-phospho-2-dehydro-3-deoxy-D-arabino-heptonate binding site. Residues 179–182 (FLNT) and N190 contribute to the NAD(+) site. E194 lines the Zn(2+) pocket. 7-phospho-2-dehydro-3-deoxy-D-arabino-heptonate-binding positions include 194 to 197 (EVIK) and K250. Residue E260 is the Proton acceptor; for 3-dehydroquinate synthase activity of the active site. 7-phospho-2-dehydro-3-deoxy-D-arabino-heptonate-binding positions include 264–268 (RNLLN) and H271. H271 contacts Zn(2+). The active-site Proton acceptor; for 3-dehydroquinate synthase activity is the H275. Residues H287 and K356 each contribute to the 7-phospho-2-dehydro-3-deoxy-D-arabino-heptonate site. H287 provides a ligand contact to Zn(2+). An EPSP synthase region spans residues 397 to 842 (VYPGFPKSLN…WNTLAQTFKV (446 aa)). C824 functions as the For EPSP synthase activity in the catalytic mechanism. Positions 867–1059 (AASIFIIGMR…RRKENTFFVS (193 aa)) are shikimate kinase. 874–881 (GMRGAGKT) contacts ATP. The tract at residues 1060–1280 (LTFPDLTPAS…AAPGQLSARE (221 aa)) is 3-dehydroquinase. Catalysis depends on H1183, which acts as the Proton acceptor; for 3-dehydroquinate dehydratase activity. The Schiff-base intermediate with substrate; for 3-dehydroquinate dehydratase activity role is filled by K1211. A shikimate dehydrogenase region spans residues 1293-1598 (AKKFAVIGKP…GVSSSDDTIS (306 aa)).

This sequence in the N-terminal section; belongs to the sugar phosphate cyclases superfamily. Dehydroquinate synthase family. In the 2nd section; belongs to the EPSP synthase family. The protein in the 3rd section; belongs to the shikimate kinase family. It in the 4th section; belongs to the type-I 3-dehydroquinase family. This sequence in the C-terminal section; belongs to the shikimate dehydrogenase family. As to quaternary structure, homodimer. Zn(2+) serves as cofactor.

The protein resides in the cytoplasm. It carries out the reaction 7-phospho-2-dehydro-3-deoxy-D-arabino-heptonate = 3-dehydroquinate + phosphate. The catalysed reaction is 3-dehydroquinate = 3-dehydroshikimate + H2O. It catalyses the reaction shikimate + NADP(+) = 3-dehydroshikimate + NADPH + H(+). The enzyme catalyses shikimate + ATP = 3-phosphoshikimate + ADP + H(+). It carries out the reaction 3-phosphoshikimate + phosphoenolpyruvate = 5-O-(1-carboxyvinyl)-3-phosphoshikimate + phosphate. The protein operates within metabolic intermediate biosynthesis; chorismate biosynthesis; chorismate from D-erythrose 4-phosphate and phosphoenolpyruvate: step 2/7. Its pathway is metabolic intermediate biosynthesis; chorismate biosynthesis; chorismate from D-erythrose 4-phosphate and phosphoenolpyruvate: step 3/7. It functions in the pathway metabolic intermediate biosynthesis; chorismate biosynthesis; chorismate from D-erythrose 4-phosphate and phosphoenolpyruvate: step 4/7. It participates in metabolic intermediate biosynthesis; chorismate biosynthesis; chorismate from D-erythrose 4-phosphate and phosphoenolpyruvate: step 5/7. The protein operates within metabolic intermediate biosynthesis; chorismate biosynthesis; chorismate from D-erythrose 4-phosphate and phosphoenolpyruvate: step 6/7. The AROM polypeptide catalyzes 5 consecutive enzymatic reactions in prechorismate polyaromatic amino acid biosynthesis. This Paracoccidioides brasiliensis (strain Pb18) protein is Pentafunctional AROM polypeptide.